We begin with the raw amino-acid sequence, 64 residues long: Translation machinery-associated protein 7B (64 aa).

A disordered region spans residues 1-38 (MSSHEGGKKKALKQPKKQAKEMDEEEKAFKQKQKEEQK). Positions 27–38 (KAFKQKQKEEQK) are enriched in basic and acidic residues.

It belongs to the TMA7 family.

The sequence is that of Translation machinery-associated protein 7B from Homo sapiens (Human).